The following is a 115-amino-acid chain: UPF0295 protein BPUM_0828 (115 aa).

2 consecutive transmembrane segments (helical) span residues 13-33 and 41-61; these read TFALSLVFVGFLIMYIGVFFK and FFMLLGVLSIGLSTVVYFWIG.

The protein belongs to the UPF0295 family.

The protein resides in the cell membrane. The polypeptide is UPF0295 protein BPUM_0828 (Bacillus pumilus (strain SAFR-032)).